The chain runs to 214 residues: Orotate phosphoribosyltransferase (214 aa).

5-phospho-alpha-D-ribose 1-diphosphate-binding positions include R125, K126, K129, H131, and 151-159 (EDTSTTGNS). Residues T155 and R183 each contribute to the orotate site.

It belongs to the purine/pyrimidine phosphoribosyltransferase family. PyrE subfamily. In terms of assembly, homodimer. Requires Mg(2+) as cofactor.

It catalyses the reaction orotidine 5'-phosphate + diphosphate = orotate + 5-phospho-alpha-D-ribose 1-diphosphate. It participates in pyrimidine metabolism; UMP biosynthesis via de novo pathway; UMP from orotate: step 1/2. Its function is as follows. Catalyzes the transfer of a ribosyl phosphate group from 5-phosphoribose 1-diphosphate to orotate, leading to the formation of orotidine monophosphate (OMP). This chain is Orotate phosphoribosyltransferase, found in Tropheryma whipplei (strain Twist) (Whipple's bacillus).